Reading from the N-terminus, the 588-residue chain is MFRVAIPRSALNLHSCLLHVTLSLVLISKAAITTAGNEDSDVREARSVSDQQVVHPVDCVISDWSAWSRCDTCQKKRYRYAKLDQPSQFGGEPCHFHDMEDEACDVPDRYTCDSIPLCEGFLCTQTGRCIHRTLQCNGEDDCGDMSDEVGCKKVPKPCRQEAEEYWGIENLAKGINILNSNLEGLVLDNRYYAGSCLPQYIQDVRFRKPHNLQQYTLETKGSYDFNVQSFESYSDYMDYSMRERMTQTIVSIGFAIPGIAEFGFNYNNAKVTRSIQKIRRASSKINSFVSAKAELELAQYMLRSDDLMLHPEFLQRLRSLPQAYVYGEYRQIYRDYGTHYITEAALGGEYEHTIILDKEKLAKTDYSLEDYKSCTQAGLKIGANIYGVYVSAGIEGGSCNGLLNEMGEDTAIGSSVEDFVAVVRGGSSESITGLVSKKLPTPQLMRLWGEGVRFNPDFIRKTTRPLYELVTSKDFSHDATLKRNLKRALSEYLAESSSCRCAPCHNNGVAVLRGTRCDCVCPTGYTGRGCEITQRKKQIATDGSWSCWGAWSSCSGRKMSRSRQCNNPVPSDGGLACRGLQQESTDCF.

The signal sequence occupies residues 1–30 (MFRVAIPRSALNLHSCLLHVTLSLVLISKA). The propeptide occupies 31 to 46 (AITTAGNEDSDVREAR). The region spanning 58–113 (DCVISDWSAWSRCDTCQKKRYRYAKLDQPSQFGGEPCHFHDMEDEACDVPDRYTCD) is the TSP type-1 1 domain. Cystine bridges form between Cys59-Cys94, Cys70-Cys104, Cys73-Cys112, Cys118-Cys129, Cys123-Cys142, Cys136-Cys151, and Cys158-Cys196. Residues Trp64 and Trp67 are each glycosylated (C-linked (Man) tryptophan). One can recognise an LDL-receptor class A domain in the interval 115–152 (IPLCEGFLCTQTGRCIHRTLQCNGEDDCGDMSDEVGCK). Ca(2+)-binding residues include Leu134, Asn137, Glu139, Asp141, Asp147, and Glu148. Residues 154–500 (VPKPCRQEAE…EYLAESSSCR (347 aa)) form the MACPF domain. The next 4 beta stranded transmembrane spans lie at 248 to 255 (TIVSIGFA), 258 to 265 (GIAEFGFN), 375 to 382 (TQAGLKIG), and 388 to 395 (VYVSAGIE). 5 disulfide bridges follow: Cys374–Cys399, Cys499–Cys547, Cys501–Cys517, Cys504–Cys519, and Cys521–Cys530. The region spanning 501–531 (CAPCHNNGVAVLRGTRCDCVCPTGYTGRGCE) is the EGF-like domain. Positions 542 to 588 (DGSWSCWGAWSSCSGRKMSRSRQCNNPVPSDGGLACRGLQQESTDCF) constitute a TSP type-1 2 domain. Residues Trp548 and Trp551 are each glycosylated (C-linked (Man) tryptophan). A disulfide bridge connects residues Cys554 and Cys587.

The protein belongs to the complement C6/C7/C8/C9 family. In terms of assembly, heterotrimer of 3 chains: alpha (C8A), beta (C8B) and gamma (C8G); the alpha and gamma chains are disulfide bonded. Component of the membrane attack complex (MAC), composed of complement C5b, C6, C7, C8A, C8B, C8G and multiple copies of the pore-forming subunit C9.

The protein resides in the secreted. It is found in the target cell membrane. Functionally, component of the membrane attack complex (MAC), a multiprotein complex activated by the complement cascade, which inserts into a target cell membrane and forms a pore, leading to target cell membrane rupture and cell lysis. The MAC is initiated by proteolytic cleavage of C5 into complement C5b in response to the classical, alternative, lectin and GZMK complement pathways. The complement pathways consist in a cascade of proteins that leads to phagocytosis and breakdown of pathogens and signaling that strengthens the adaptive immune system. C8B, together with C8A and C8G, inserts into the target membrane, but does not form pores by itself. During MAC assembly, associates with C5b, C6 and C7 to form the C5b8 intermediate complex that inserts into the target membrane and traverses the bilayer increasing membrane rigidity. This Paralichthys olivaceus (Bastard halibut) protein is Complement component C8 beta chain (c8b).